A 1767-amino-acid polypeptide reads, in one-letter code: Trans-Golgi network-localized SYP41-interacting protein 1 (1767 aa).

Residues 1 to 72 (MHEKDDLPQD…LTTDDDDNDD (72 aa)) are disordered. The Cytoplasmic segment spans residues 1–1748 (MHEKDDLPQD…RVLMSRPQAR (1748 aa)). The span at 16–32 (IENDDESNGQEEEELDP) shows a compositional bias: acidic residues. Coiled-coil stretches lie at residues 276-436 (LSHL…MSTA), 493-516 (VRSL…LKDL), 570-590 (KSNI…MEET), 684-805 (VSNL…LQQS), and 845-1082 (IQEV…LSSK). Over residues 1177-1190 (DNSVNTEPENSQGS) the composition is skewed to polar residues. The disordered stretch occupies residues 1177–1198 (DNSVNTEPENSQGSAADEDEIS). Coiled coils occupy residues 1251 to 1310 (NSSL…FQEN), 1362 to 1424 (IRDM…WHEK), 1522 to 1542 (LKKA…AKNE), and 1603 to 1630 (LAGS…KAIQ). Residues 1749–1766 (LGVMVYSLLLHLWLLASI) form a helical; Anchor for type IV membrane protein membrane-spanning segment. Position 1767 (leucine 1767) is a topological domain, vesicular.

Interacts with SYP41. Expressed ubiquitously in roots, leaves and flowers, and, to a lower extent, in stems.

Its subcellular location is the golgi apparatus. The protein localises to the trans-Golgi network membrane. Its function is as follows. Tethering factor involved in vesicle fusion at the trans-Golgi network (TGN) thus being required for efficient protein trafficking to the vacuole. Implicated in resistance to salt and osmotic stresses. Modulates the cell morphology (e.g. epidermal cell file rotation (CFR) and cell expansion) in mature regions of roots and the base of hypocotyls as well as root skewing, a process leading to root movement within the soil in order to maximize anchorage and nutrient acquisition, probably by regulating microtubule stabilization independently of their orientation. This is Trans-Golgi network-localized SYP41-interacting protein 1 from Arabidopsis thaliana (Mouse-ear cress).